A 364-amino-acid chain; its full sequence is Mannose-1-phosphate guanyltransferase (364 aa).

It belongs to the transferase hexapeptide repeat family.

It is found in the cytoplasm. The enzyme catalyses alpha-D-mannose 1-phosphate + GTP + H(+) = GDP-alpha-D-mannose + diphosphate. It participates in nucleotide-sugar biosynthesis; GDP-alpha-D-mannose biosynthesis; GDP-alpha-D-mannose from alpha-D-mannose 1-phosphate (GTP route): step 1/1. Involved in cell wall synthesis where it is required for glycosylation. Involved in cell cycle progression through cell-size checkpoint. The polypeptide is Mannose-1-phosphate guanyltransferase (MPG1) (Gibberella zeae (strain ATCC MYA-4620 / CBS 123657 / FGSC 9075 / NRRL 31084 / PH-1) (Wheat head blight fungus)).